The following is a 235-amino-acid chain: 3-deoxy-D-manno-octulosonic acid kinase (235 aa).

The active site involves D167.

It belongs to the protein kinase superfamily. KdkA/RfaP family.

It localises to the cell inner membrane. It carries out the reaction an alpha-Kdo-(2-&gt;6)-lipid IVA + ATP = a 4-O-phospho-alpha-Kdo-(2-&gt;6)-lipid IVA + ADP + H(+). The protein operates within bacterial outer membrane biogenesis; LPS core biosynthesis. In terms of biological role, catalyzes the ATP-dependent phosphorylation of the 3-deoxy-D-manno-octulosonic acid (Kdo) residue in Kdo-lipid IV(A) at the 4-OH position. In Vibrio cholerae serotype O1 (strain ATCC 39315 / El Tor Inaba N16961), this protein is 3-deoxy-D-manno-octulosonic acid kinase (kdkA).